Reading from the N-terminus, the 376-residue chain is Alcohol dehydrogenase class-3 (376 aa).

Position 1 is an N-acetylalanine (Ala1). Zn(2+) is bound by residues Cys47, His69, Cys99, Cys102, Cys105, Cys113, and Cys176.

The protein belongs to the zinc-containing alcohol dehydrogenase family. Class-III subfamily. As to quaternary structure, homodimer. Zn(2+) is required as a cofactor.

Its subcellular location is the cytoplasm. It catalyses the reaction a primary alcohol + NAD(+) = an aldehyde + NADH + H(+). It carries out the reaction a secondary alcohol + NAD(+) = a ketone + NADH + H(+). The catalysed reaction is S-(hydroxymethyl)glutathione + NADP(+) = S-formylglutathione + NADPH + H(+). The enzyme catalyses S-(hydroxymethyl)glutathione + NAD(+) = S-formylglutathione + NADH + H(+). It catalyses the reaction S-nitrosoglutathione + NADH + H(+) = S-(hydroxysulfenamide)glutathione + NAD(+). Class-III ADH is remarkably ineffective in oxidizing ethanol, but it readily catalyzes the oxidation of long-chain primary alcohols and the oxidation of S-(hydroxymethyl) glutathione. Also acts as a S-nitroso-glutathione reductase by catalyzing the NADH-dependent reduction of S-nitrosoglutathione, thereby regulating protein S-nitrosylation. This chain is Alcohol dehydrogenase class-3, found in Scyliorhinus canicula (Small-spotted catshark).